The chain runs to 253 residues: Ethylene-responsive transcription factor RAP2-11 (253 aa).

A DNA-binding region (AP2/ERF) is located at residues 21–78; sequence KFVGVRQRPSGKWVAEIKDTTQKIRMWLGTFETAEEAARAYDEAACLLRGSNTRTNFA.

It belongs to the AP2/ERF transcription factor family. ERF subfamily.

Its subcellular location is the nucleus. Its function is as follows. Probably acts as a transcriptional activator. Binds to the GCC-box pathogenesis-related promoter element. May be involved in the regulation of gene expression by stress factors and by components of stress signal transduction pathways. The sequence is that of Ethylene-responsive transcription factor RAP2-11 (RAP2-11) from Arabidopsis thaliana (Mouse-ear cress).